The primary structure comprises 364 residues: FK506-binding protein 4 (364 aa).

Disordered regions lie at residues 92–148 (SMFG…DDEI) and 168–239 (EADK…PTKP). Acidic residues predominate over residues 94–148 (FGDDEHGEDEDNEEEEGEEGEDEEMEGEDEDEDEEDEDEEDEDEEEEDDEEDDEI). Residues 168 to 184 (EADKNKQQKKPKQEEPV) are compositionally biased toward basic and acidic residues. Over residues 185–239 (KQVTPVKPTAQAAKPTAATTTTTTTTTTTPTKQTTPAKPAAKPVTPTKPVTPTKP) the composition is skewed to low complexity. In terms of domain architecture, PPIase FKBP-type spans 277 to 363 (GKKVGVKYIG…IFDVELVSCA (87 aa)).

The protein belongs to the FKBP-type PPIase family. Binds to histones H3 and H4.

It is found in the nucleus. The catalysed reaction is [protein]-peptidylproline (omega=180) = [protein]-peptidylproline (omega=0). Inhibited by both FK506 and rapamycin. Its function is as follows. PPIase that acts as a histone chaperone. Histone proline isomerase that increases the rate of cis-trans isomerization at prolines on the histone H3 N-terminal tail. Proline isomerization influences H3 methylation thereby regulating gene expression. This chain is FK506-binding protein 4 (fkbp4), found in Dictyostelium discoideum (Social amoeba).